A 174-amino-acid polypeptide reads, in one-letter code: Dehydratase AgnL8 (174 aa).

Substrate-binding residues include Tyr24, Tyr44, and Phe47. Residues His79 and His104 contribute to the active site.

This sequence belongs to the scytalone dehydratase family. In terms of assembly, homotrimer. Each subunit contains an active site, located in the central part of the hydrophobic core of the monomer, which functions independently.

Its pathway is secondary metabolite biosynthesis. Functionally, dehydratase; part of the gene cluster that mediates the biosynthesis of agnestins, dihydroxy-xanthone metabolites. The pathway begins with the assembly and cyclization of atrochrysone thioester by the non-reducing polyketide synthase Agnpks1. The atrochrysone carboxyl ACP thioesterase AgnL7 then breaks the thioester bond and releases the atrochrysone carboxylic acid as the first enzyme-free intermediate. The decarboxylase AgnL1 then catalyzes the concerted decarboxylation-elimination required to convert atochrysone carboxylic acid into emodin anthrone, which is further oxidized to emodin by the anthrone oxygenase AgnL2. Emodin then undergoes reduction catalyzed by the oxidoreductase AgnL4 to yield the dihydroquinone tautomer which is the substrate for reduction by the short chain dehydrogenase AgnL6 reduction to produce hydroxyketone, followed by AgnL8 dehydration and likely spontaneous autoxidation to chrysophanol. Baeyer-Villiger oxidation by the oxidase AgnL3 leads to monodictyphenone via cleavage of the C-10/C-10a bond of chrysophanol. Alternative cleavage at the C-4a/C-10 bond of chrysophanol also leads to the formation some cephalone F. Further conversion to agnestins A and B, requires reduction to dihydro-monodictyphenone, oxidation to agnestin C probably via an epoxide, and rearrangement to either agnestin A or agnestin B directly, although agnestin A or agnestin B can also interconvert. Within the cluster, AgnR1 is the only unassigned oxidoreductase present which could be involved in this conversion. However, AgnR1 seems not to be involved in this step, and thus genes involved in the proposed oxidation/reduction may be located elsewhere on the genome. Further agnestin A derivatives are probably formed by spontaneous decarboxylations, dehydrations and methanolysis reactions. The chain is Dehydratase AgnL8 from Paecilomyces divaricatus (Penicillium divaricatum).